Here is a 314-residue protein sequence, read N- to C-terminus: Ribosomal RNA small subunit methyltransferase H (314 aa).

S-adenosyl-L-methionine contacts are provided by residues 34–36 (GGH), D53, F82, D103, and Q110.

Belongs to the methyltransferase superfamily. RsmH family.

Its subcellular location is the cytoplasm. The enzyme catalyses cytidine(1402) in 16S rRNA + S-adenosyl-L-methionine = N(4)-methylcytidine(1402) in 16S rRNA + S-adenosyl-L-homocysteine + H(+). Specifically methylates the N4 position of cytidine in position 1402 (C1402) of 16S rRNA. The protein is Ribosomal RNA small subunit methyltransferase H of Levilactobacillus brevis (strain ATCC 367 / BCRC 12310 / CIP 105137 / JCM 1170 / LMG 11437 / NCIMB 947 / NCTC 947) (Lactobacillus brevis).